Here is a 122-residue protein sequence, read N- to C-terminus: Large ribosomal subunit protein uL14c (122 aa).

Belongs to the universal ribosomal protein uL14 family. As to quaternary structure, part of the 50S ribosomal subunit.

It is found in the plastid. The protein resides in the chloroplast. Its function is as follows. Binds to 23S rRNA. In Ipomoea purpurea (Common morning glory), this protein is Large ribosomal subunit protein uL14c.